A 142-amino-acid polypeptide reads, in one-letter code: ATP synthase epsilon chain (142 aa).

The protein belongs to the ATPase epsilon chain family. In terms of assembly, F-type ATPases have 2 components, CF(1) - the catalytic core - and CF(0) - the membrane proton channel. CF(1) has five subunits: alpha(3), beta(3), gamma(1), delta(1), epsilon(1). CF(0) has three main subunits: a, b and c.

The protein resides in the cell inner membrane. Produces ATP from ADP in the presence of a proton gradient across the membrane. The chain is ATP synthase epsilon chain from Shewanella halifaxensis (strain HAW-EB4).